Here is a 169-residue protein sequence, read N- to C-terminus: uncharacterized protein (169 aa).

This is an uncharacterized protein from Saccharomyces cerevisiae (strain ATCC 204508 / S288c) (Baker's yeast).